The following is a 433-amino-acid chain: Alpha-(1,3)-fucosyltransferase 4 (433 aa).

The Cytoplasmic segment spans residues 1–52; it reads MAPARQELQHESRCRPSRTVDAWRAAVATRGRHMETPGYRRRTRCGGWGLPR. The chain crosses the membrane as a helical; Signal-anchor for type II membrane protein span at residues 53-74; it reads SVSSLAAVGLLCTALTTFICWG. The Lumenal portion of the chain corresponds to 75–433; it reads QLPPLPWASP…IHNLADWFQR (359 aa). N-linked (GlcNAc...) asparagine glycosylation is found at N117 and N218.

The protein belongs to the glycosyltransferase 10 family. As to expression, highest expression in stomach and colon. It is also expressed in the lung, testis, uterus, small intestine and to a lesser extent in spleen, and ovary. Present in trace amounts in brain, thymus, heart, smooth muscle, kidney and bone marrow. Not found in liver, salivary gland and pancreas.

The protein localises to the golgi apparatus. The protein resides in the golgi stack membrane. It catalyses the reaction a beta-D-galactosyl-(1-&gt;4)-N-acetyl-beta-D-glucosaminyl derivative + GDP-beta-L-fucose = a beta-D-galactosyl-(1-&gt;4)-[alpha-L-fucosyl-(1-&gt;3)]-N-acetyl-beta-D-glucosaminyl derivative + GDP + H(+). The enzyme catalyses an N-acetyl-alpha-neuraminyl-(2-&gt;3)-beta-D-galactosyl-(1-&gt;4)-N-acetyl-beta-D-glucosaminyl derivative + GDP-beta-L-fucose = an alpha-Neu5Ac-(2-&gt;3)-beta-D-Gal-(1-&gt;4)-[alpha-L-Fuc-(1-&gt;3)]-beta-D-GlcNAc derivative + GDP + H(+). The catalysed reaction is an alpha-Neu5Ac-(2-&gt;3)-beta-D-Gal-(1-&gt;4)-beta-D-GlcNAc-(1-&gt;3)-beta-D-Gal-(1-&gt;4)-beta-D-GlcNAc derivative + GDP-beta-L-fucose = an alpha-Neu5Ac-(2-&gt;3)-beta-D-Gal-(1-&gt;4)-beta-D-GlcNAc-(1-&gt;3)-beta-D-Gal-(1-&gt;4)-[alpha-L-Fuc-(1-&gt;3)]-beta-D-GlcNAc derivative + GDP + H(+). It carries out the reaction an alpha-Neu5Ac-(2-&gt;3)-beta-D-Gal-(1-&gt;4)-beta-D-GlcNAc6S derivative + GDP-beta-L-fucose = an alpha-Neu5Ac-(2-&gt;3)-beta-D-Gal-(1-&gt;4)-[alpha-L-Fuc-(1-&gt;3)]-beta-D-GlcNAc6S derivative + GDP + H(+). It participates in protein modification; protein glycosylation. Functionally, catalyzes alpha(1-&gt;3) linkage of fucosyl moiety transferred from GDP-beta-L-fucose to N-acetyl glucosamine (GlcNAc) within type 2 lactosamine (LacNAc, Gal-beta(1-&gt;4)GlcNAc) glycan attached to N- or O-linked glycoproteins. Robustly fucosylates nonsialylated distal LacNAc unit of the polylactosamine chain to form Lewis X antigen (CD15), a glycan determinant known to mediate important cellular functions in development and immunity. Fucosylates with lower efficiency sialylated LacNAc acceptors to form sialyl Lewis X and 6-sulfo sialyl Lewis X determinants that serve as recognition epitopes for C-type lectins. Together with FUT7 contributes to SELE, SELL and SELP selectin ligand biosynthesis and selectin-dependent lymphocyte homing, leukocyte migration and blood leukocyte homeostasis. In a cell type specific manner, may also fucosylate the internal LacNAc unit of the polylactosamine chain to form VIM-2 antigen that serves as recognition epitope for SELE. The sequence is that of Alpha-(1,3)-fucosyltransferase 4 (Fut4) from Mus musculus (Mouse).